Reading from the N-terminus, the 192-residue chain is UPF0312 protein PSPTO_5071 (192 aa).

The signal sequence occupies residues 1–23 (MLKKSLAALALGTALLSAGQAMA).

The protein belongs to the UPF0312 family. Type 1 subfamily.

It localises to the periplasm. In Pseudomonas syringae pv. tomato (strain ATCC BAA-871 / DC3000), this protein is UPF0312 protein PSPTO_5071.